We begin with the raw amino-acid sequence, 521 residues long: GMP synthase [glutamine-hydrolyzing] (521 aa).

A Glutamine amidotransferase type-1 domain is found at 8–203 (KILILDFGAQ…VVDVCGCQTL (196 aa)). Cys-85 (nucleophile) is an active-site residue. Catalysis depends on residues His-177 and Glu-179. The 193-residue stretch at 204-396 (WTAANIIDDQ…LGLPRTMVYR (193 aa)) folds into the GMPS ATP-PPase domain. 231–237 (SGGVDSS) lines the ATP pocket.

In terms of assembly, homodimer.

The catalysed reaction is XMP + L-glutamine + ATP + H2O = GMP + L-glutamate + AMP + diphosphate + 2 H(+). Its pathway is purine metabolism; GMP biosynthesis; GMP from XMP (L-Gln route): step 1/1. Its function is as follows. Catalyzes the synthesis of GMP from XMP. The chain is GMP synthase [glutamine-hydrolyzing] from Stenotrophomonas maltophilia (strain R551-3).